The sequence spans 260 residues: Putative ABC transporter ATP-binding protein PH0132 (260 aa).

Positions 2–234 (IEFRDVWFWY…DLEGFGLKEP (233 aa)) constitute an ABC transporter domain. Position 34 to 41 (34 to 41 (GPNGSGKT)) interacts with ATP.

The protein belongs to the ABC transporter superfamily.

The protein localises to the cell membrane. In terms of biological role, probably part of an ABC transporter complex. Responsible for energy coupling to the transport system. This chain is Putative ABC transporter ATP-binding protein PH0132, found in Pyrococcus horikoshii (strain ATCC 700860 / DSM 12428 / JCM 9974 / NBRC 100139 / OT-3).